Reading from the N-terminus, the 204-residue chain is Small ribosomal subunit protein uS7 (204 aa).

An N-acetylmethionine modification is found at methionine 1. Residue threonine 2 is modified to N-acetylthreonine; in 40S ribosomal protein S5, N-terminally processed. Threonine 14 is subject to Phosphothreonine. Lysine 47 carries the post-translational modification N6-acetyllysine; alternate. Lysine 47 participates in a covalent cross-link: Glycyl lysine isopeptide (Lys-Gly) (interchain with G-Cter in SUMO2); alternate. Serine 142 bears the Phosphoserine mark.

The protein belongs to the universal ribosomal protein uS7 family. As to quaternary structure, component of the small ribosomal subunit. Part of the small subunit (SSU) processome, composed of more than 70 proteins and the RNA chaperone small nucleolar RNA (snoRNA) U3.

Its subcellular location is the cytoplasm. It is found in the nucleus. The protein localises to the nucleolus. In terms of biological role, component of the small ribosomal subunit. The ribosome is a large ribonucleoprotein complex responsible for the synthesis of proteins in the cell. Part of the small subunit (SSU) processome, first precursor of the small eukaryotic ribosomal subunit. During the assembly of the SSU processome in the nucleolus, many ribosome biogenesis factors, an RNA chaperone and ribosomal proteins associate with the nascent pre-rRNA and work in concert to generate RNA folding, modifications, rearrangements and cleavage as well as targeted degradation of pre-ribosomal RNA by the RNA exosome. This chain is Small ribosomal subunit protein uS7 (Rps5), found in Rattus norvegicus (Rat).